A 455-amino-acid polypeptide reads, in one-letter code: Venom prothrombin activator nigrarin-D (455 aa).

A signal peptide spans 1 to 20; sequence MAPPLLLCLILTFLWNLPEA. The propeptide occupies 21–40; the sequence is ESNVFLKSKVANRFLQRTKR. Residues 41–86 form the Gla domain; the sequence is SNSIFEEFKAGNIERECIEEKCSKEEAREVFEDNEKTETFWNVYVD. 11 positions are modified to 4-carboxyglutamate: Glu46, Glu47, Glu54, Glu56, Glu59, Glu60, Glu65, Glu66, Glu69, Glu72, and Glu75. Residues Cys57 and Cys62 are joined by a disulfide bond. The 37-residue stretch at 86–122 folds into the EGF-like 1; calcium-binding domain; it reads DGDQCSSNPCHYRGTCKDGIGSYTCTCLPNYEGKNCE. 11 cysteine pairs are disulfide-bonded: Cys90/Cys101, Cys95/Cys110, Cys112/Cys121, Cys129/Cys140, Cys136/Cys149, Cys151/Cys164, Cys172/Cys328, Cys216/Cys221, Cys236/Cys252, Cys376/Cys390, and Cys401/Cys429. Ser92 carries an O-linked (Hex...) serine glycan. Residues 129–164 enclose the EGF-like 2 domain; that stretch reads CRVFNGNCWHFCKSVQNEIQCSCAESYRLGDDGHSC. Residues 182 to 209 constitute a propeptide, activation peptide; it reads REASLPDFVQSQKAILLKKSDNPSPDIR. Residues 210-453 enclose the Peptidase S1 domain; the sequence is IINGMDCKLG…FIPWIKAIMS (244 aa). His251 (charge relay system) is an active-site residue. Asn254 carries N-linked (GlcNAc...) asparagine glycosylation. Asp308 (charge relay system) is an active-site residue. Catalysis depends on Ser405, which acts as the Charge relay system.

Belongs to the peptidase S1 family. Snake venom subfamily. In terms of assembly, heterodimer of a light chain and a heavy chain; disulfide-linked. Post-translationally, the vitamin K-dependent, enzymatic carboxylation of some glutamate residues allows the modified protein to bind calcium. Expressed by the venom gland.

It localises to the secreted. The enzyme catalyses Selective cleavage of Arg-|-Thr and then Arg-|-Ile bonds in prothrombin to form thrombin.. Snake prothrombin activator that attacks the hemostatic system of prey. This protein is functionally similar to blood coagulation factor Xa. This Cryptophis nigrescens (Eastern small-eyed snake) protein is Venom prothrombin activator nigrarin-D.